We begin with the raw amino-acid sequence, 339 residues long: GTPase Obg (339 aa).

Residues 1-159 form the Obg domain; it reads MKFVDEAFVR…RELKLELKLL (159 aa). The segment at 127-147 is disordered; it reads NTHFKSSTNRAPRRTTSGEEG. The region spanning 160-333 is the OBG-type G domain; that stretch reads ADVGLLGLPN…LCYDLMSFLE (174 aa). GTP-binding positions include 166 to 173, 191 to 195, 213 to 216, 283 to 286, and 314 to 316; these read GLPNAGKS, FTTLY, DIPG, NKID, and SAI. Residues Ser-173 and Thr-193 each coordinate Mg(2+).

Belongs to the TRAFAC class OBG-HflX-like GTPase superfamily. OBG GTPase family. Monomer. Mg(2+) serves as cofactor.

The protein resides in the cytoplasm. An essential GTPase which binds GTP, GDP and possibly (p)ppGpp with moderate affinity, with high nucleotide exchange rates and a fairly low GTP hydrolysis rate. Plays a role in control of the cell cycle, stress response, ribosome biogenesis and in those bacteria that undergo differentiation, in morphogenesis control. The protein is GTPase Obg of Coxiella burnetii (strain CbuG_Q212) (Coxiella burnetii (strain Q212)).